The sequence spans 274 residues: MQQLQNVIETAFERRADITPVNVDTVTREAVNQVISLLDSGALRVAEKIDGQWVTHQWLKKAVLLSFRINDNQVIDGAESRYFDKVPMKFADYDEARFQKEGFRVVPPAAVRQGAFIARNTVLMPSYVNIGAYVDEGTMVDTWATVGSCAQIGKNVHLSGGVGIGGVLEPLQANPTIIEDNCFIGARSEVVEGVIVEEGSVISMGVYLGQSTKIYDRETGEVHYGRVPAGSVVVSGNLPSKDGKYSLYCAVIVKKVDAKTRGKVGINELLRTID.

Belongs to the transferase hexapeptide repeat family.

It localises to the cytoplasm. It carries out the reaction (S)-2,3,4,5-tetrahydrodipicolinate + succinyl-CoA + H2O = (S)-2-succinylamino-6-oxoheptanedioate + CoA. Its pathway is amino-acid biosynthesis; L-lysine biosynthesis via DAP pathway; LL-2,6-diaminopimelate from (S)-tetrahydrodipicolinate (succinylase route): step 1/3. The protein is 2,3,4,5-tetrahydropyridine-2,6-dicarboxylate N-succinyltransferase of Salmonella agona (strain SL483).